We begin with the raw amino-acid sequence, 485 residues long: Cobyric acid synthase (485 aa).

Residues 248–435 (VLKVVVPVLP…LHGLFESPDA (188 aa)) form the GATase cobBQ-type domain. The active-site Nucleophile is the Cys329. His427 is a catalytic residue.

It belongs to the CobB/CobQ family. CobQ subfamily.

Its pathway is cofactor biosynthesis; adenosylcobalamin biosynthesis. In terms of biological role, catalyzes amidations at positions B, D, E, and G on adenosylcobyrinic A,C-diamide. NH(2) groups are provided by glutamine, and one molecule of ATP is hydrogenolyzed for each amidation. In Stutzerimonas stutzeri (strain A1501) (Pseudomonas stutzeri), this protein is Cobyric acid synthase.